The primary structure comprises 593 residues: Monoterpene synthase 7, chloroplastic (593 aa).

The transit peptide at 1–39 (MSVSLSFAASATFGFRGGLGGFSRPAAAIKQWRCLPRIQ) directs the protein to the chloroplast. Residues aspartate 348, aspartate 352, aspartate 491, and glutamate 499 each contribute to the Mg(2+) site. A DDXXD motif motif is present at residues 348–352 (DDVYD).

The protein belongs to the terpene synthase family. Tpsa subfamily. Mg(2+) is required as a cofactor. It depends on Mn(2+) as a cofactor. In terms of tissue distribution, highly expressed in flowers, petals and sepals, but almost undetectable in vegetative organs.

The protein resides in the plastid. It localises to the chloroplast. It catalyses the reaction (2E)-geranyl diphosphate = sabinene + diphosphate. It carries out the reaction (2E)-geranyl diphosphate = terpinolene + diphosphate. The enzyme catalyses (2E)-geranyl diphosphate = alpha-pinene + diphosphate. The catalysed reaction is (2E)-geranyl diphosphate = beta-pinene + diphosphate. It catalyses the reaction (2E)-geranyl diphosphate = beta-myrcene + diphosphate. It carries out the reaction (2E)-geranyl diphosphate = alpha-terpinene + diphosphate. The enzyme catalyses (2E)-geranyl diphosphate = beta-phellandrene + diphosphate. The catalysed reaction is (2E)-geranyl diphosphate = gamma-terpinene + diphosphate. It participates in secondary metabolite biosynthesis; terpenoid biosynthesis. In terms of biological role, monoterpene synthase involved in the biosynthesis of volatile compounds present in floral scent. Mediates the conversion of (2E)-geranyl diphosphate (GPP) into sabinene and sub-products such as alpha-thujene, alpha-pinene, beta-pinene, myrcene, alpha-phellandrene, alpha-terpinene, beta-phellandrene, gamma-terpinene and terpinolene. Unable to use farnesyl diphosphate (FPP) as substrate. The chain is Monoterpene synthase 7, chloroplastic from Hedychium coronarium (White butterfly ginger-lily).